The following is a 250-amino-acid chain: Protein REVERSION-TO-ETHYLENE SENSITIVITY1 (250 aa).

The next 3 membrane-spanning stretches (helical) occupy residues 55–75 (IVWT…HIGL), 200–220 (SVVR…VLVG), and 221–241 (WPFL…FIIA).

As to quaternary structure, interacts with ETR1 through a region corresponding to its ethylene-binding domain. As to expression, strongly expressed in 1-4-day-old seedlings in the apical hook, cotyledons, root vascular tissue, root tip and root hairs, with little or no expression in the hypocotyl. In light-grown seedlings, expression could also be seen in the apex and young leaves, and disappeared from the cotyledons by 10 days. In mature plants, expressed in floral buds, the style of mature flowers, stems and the rachis.

It is found in the endoplasmic reticulum membrane. The protein resides in the golgi apparatus membrane. Functionally, acts at an early step in the ethylene signaling pathway. Positively regulates ETR1, leading to the negative regulation of ethylene responses. In Arabidopsis thaliana (Mouse-ear cress), this protein is Protein REVERSION-TO-ETHYLENE SENSITIVITY1 (RTE1).